Reading from the N-terminus, the 273-residue chain is Undecaprenyl-diphosphatase (273 aa).

6 helical membrane passes run Leu46 to Tyr63, Phe83 to Lys103, Leu109 to Val129, Ala184 to Leu204, Ala218 to Leu238, and Phe249 to Val269.

It belongs to the UppP family.

The protein localises to the cell inner membrane. The enzyme catalyses di-trans,octa-cis-undecaprenyl diphosphate + H2O = di-trans,octa-cis-undecaprenyl phosphate + phosphate + H(+). Its function is as follows. Catalyzes the dephosphorylation of undecaprenyl diphosphate (UPP). Confers resistance to bacitracin. The protein is Undecaprenyl-diphosphatase of Methylococcus capsulatus (strain ATCC 33009 / NCIMB 11132 / Bath).